A 202-amino-acid polypeptide reads, in one-letter code: Securin (202 aa).

A2 carries the post-translational modification N-acetylalanine. Residues 35–90 (LDGRSQVSTPRFGKTFDAPPALPKATRKALGTVNRATEKSVKTKGPLKQKQPSFSA) form a disordered region. A D-box motif is present at residues 61–64 (RKAL). 2 consecutive short sequence motifs (TEK-box) follow at residues 71-73 (TEK) and 94-96 (TEK). The SH3-binding signature appears at 163 to 173 (PPSPVKMPSPP). At S165 the chain carries Phosphoserine; by CDK1.

Belongs to the securin family. In terms of assembly, interacts with RPS10 and DNAJA1. Interacts with the caspase-like ESPL1, and prevents its protease activity probably by covering its active site. Interacts with TP53 and blocks its activity probably by blocking its binding to DNA. Interacts with the Ku 70 kDa subunit of ds-DNA kinase. Interacts with PTTG1IP. Phosphorylated at Ser-165 by CDK1 during mitosis. Post-translationally, phosphorylated in vitro by ds-DNA kinase. In terms of processing, ubiquitinated through 'Lys-11' linkage of ubiquitin moieties by the anaphase promoting complex (APC) at the onset of anaphase, conducting to its degradation. 'Lys-11'-linked ubiquitination is mediated by the E2 ligase UBE2C/UBCH10. In terms of tissue distribution, expressed at low level in most tissues, except in adult testis, where it is highly expressed. Overexpressed in many patients suffering from pituitary adenomas, primary epithelial neoplasias, and esophageal cancer.

The protein resides in the cytoplasm. The protein localises to the nucleus. In terms of biological role, regulatory protein, which plays a central role in chromosome stability, in the p53/TP53 pathway, and DNA repair. Probably acts by blocking the action of key proteins. During the mitosis, it blocks Separase/ESPL1 function, preventing the proteolysis of the cohesin complex and the subsequent segregation of the chromosomes. At the onset of anaphase, it is ubiquitinated, conducting to its destruction and to the liberation of ESPL1. Its function is however not limited to a blocking activity, since it is required to activate ESPL1. Negatively regulates the transcriptional activity and related apoptosis activity of TP53. The negative regulation of TP53 may explain the strong transforming capability of the protein when it is overexpressed. May also play a role in DNA repair via its interaction with Ku, possibly by connecting DNA damage-response pathways with sister chromatid separation. This Homo sapiens (Human) protein is Securin (PTTG1).